The sequence spans 471 residues: V-type ATP synthase beta chain (471 aa).

The protein belongs to the ATPase alpha/beta chains family.

Functionally, produces ATP from ADP in the presence of a proton gradient across the membrane. The V-type beta chain is a regulatory subunit. The protein is V-type ATP synthase beta chain of Streptococcus pyogenes serotype M28 (strain MGAS6180).